Consider the following 139-residue polypeptide: Cuticle protein 6 (139 aa).

Residue Gln1 is modified to Pyrrolidone carboxylic acid. Residues 31 to 92 form the Chitin-binding type R&amp;R domain; it reads LGQFAFHHAG…VGANNLPEAP (62 aa).

The sequence is that of Cuticle protein 6 from Blaberus craniifer (Death's head cockroach).